A 908-amino-acid chain; its full sequence is Disease resistance protein RPP8 (908 aa).

Residues 15-57 (DLLSRESERLQGIDGQLDGLKRQLRSLQSLLKDADAKKHGSDR) adopt a coiled-coil conformation. Residues 146-459 (RQRVQREIRQ…AEGIYDGSTI (314 aa)) form the NB-ARC domain. 192–199 (GMGGIGKT) serves as a coordination point for ATP. 9 LRR repeats span residues 575–600 (LTLL…IGGL), 601–623 (IHLR…MRNL), 648–673 (MIQL…DLVN), 693–718 (MTKL…SLRE), 722–746 (LETL…VLDH), 748–770 (IHLK…QFPP), 793–820 (LLHL…GFPQ), 842–867 (MPCL…KYIT), and 882–905 (KEKL…QFIN).

Belongs to the disease resistance NB-LRR family. RPP8/HRT subfamily. As to quaternary structure, interacts with the NAC protein TIP. Interacts with MORC1/CRT1. Interacts with COP1 and is subsequently degraded in a 26s proteasome dependent manner. As to expression, mostly expressed in leaves, and, to a lower extent, in roots.

The protein resides in the cell membrane. Functionally, disease resistance protein. Resistance proteins guard the plant against pathogens that contain an appropriate avirulence protein via an indirect interaction with this avirulence protein. That triggers a defense system including the hypersensitive response, which restricts the pathogen growth. The interaction with TIP (TCV-interacting protein) may be essential for the recognition of the avirulence proteins, and the triggering of the defense response. Triggers resistance to turnip crinkle virus (TCV) via a SAG101-dependent pathway. This Arabidopsis thaliana (Mouse-ear cress) protein is Disease resistance protein RPP8 (RPP8).